Reading from the N-terminus, the 487-residue chain is Proline--tRNA ligase (487 aa).

The protein belongs to the class-II aminoacyl-tRNA synthetase family. ProS type 3 subfamily. Homodimer.

It is found in the cytoplasm. The catalysed reaction is tRNA(Pro) + L-proline + ATP = L-prolyl-tRNA(Pro) + AMP + diphosphate. In terms of biological role, catalyzes the attachment of proline to tRNA(Pro) in a two-step reaction: proline is first activated by ATP to form Pro-AMP and then transferred to the acceptor end of tRNA(Pro). The sequence is that of Proline--tRNA ligase from Pyrobaculum neutrophilum (strain DSM 2338 / JCM 9278 / NBRC 100436 / V24Sta) (Thermoproteus neutrophilus).